The chain runs to 121 residues: Small ribosomal subunit protein uS13 (121 aa).

The disordered stretch occupies residues 91–121; that stretch reads HRKGLPLRGQRTRTNARTRKGPRKAGVALKK.

It belongs to the universal ribosomal protein uS13 family. Part of the 30S ribosomal subunit. Forms a loose heterodimer with protein S19. Forms two bridges to the 50S subunit in the 70S ribosome.

Its function is as follows. Located at the top of the head of the 30S subunit, it contacts several helices of the 16S rRNA. In the 70S ribosome it contacts the 23S rRNA (bridge B1a) and protein L5 of the 50S subunit (bridge B1b), connecting the 2 subunits; these bridges are implicated in subunit movement. Contacts the tRNAs in the A and P-sites. This chain is Small ribosomal subunit protein uS13, found in Cupriavidus pinatubonensis (strain JMP 134 / LMG 1197) (Cupriavidus necator (strain JMP 134)).